Consider the following 295-residue polypeptide: 2-methylisocitrate lyase (295 aa).

45–47 (SGG) contacts substrate. Mg(2+)-binding residues include Asp-85 and Asp-87. Substrate is bound by residues 123 to 124 (CG), Arg-158, Glu-188, 210 to 212 (NIT), Arg-241, and Arg-270.

It belongs to the isocitrate lyase/PEP mutase superfamily. Methylisocitrate lyase family. As to quaternary structure, homotetramer; dimer of dimers. Mg(2+) is required as a cofactor.

It carries out the reaction (2S,3R)-3-hydroxybutane-1,2,3-tricarboxylate = pyruvate + succinate. The protein operates within organic acid metabolism; propanoate degradation. Functionally, involved in the catabolism of short chain fatty acids (SCFA) via the 2-methylcitrate cycle I (propionate degradation route). Catalyzes the thermodynamically favored C-C bond cleavage of (2R,3S)-2-methylisocitrate to yield pyruvate and succinate via an alpha-carboxy-carbanion intermediate. The sequence is that of 2-methylisocitrate lyase from Salmonella typhimurium (strain LT2 / SGSC1412 / ATCC 700720).